A 480-amino-acid chain; its full sequence is Ammonium transporter 3 member 3 (480 aa).

Helical transmembrane passes span 31–51 (SATLVGLQSMPGLVILYGSIV), 59–79 (SAFMALYAFAAVWICWVVWAY), 135–155 (MVYFQCMFASITIIILAGSLL), 169–189 (LWITFSYTVCAFSLWGGGFLF), 198–218 (GGYVIHLSSGIAGLTAAYWVG), 233–253 (ILLVLAGAGLLWLGWTGFNGG), 265–287 (AVLNTHICASTSLLVWTILDVFF), 292–314 (SVIGAVQGMITGLVCITPGAGLV), 318–337 (AAIVMGILSGSIPWYTMMVL), 361–381 (GFLGGATTGLFAEPILCSLFL), and 407–427 (LFVTAWNIVITSIICVIISLI).

It belongs to the ammonia transporter channel (TC 1.A.11.2) family.

It is found in the membrane. In terms of biological role, involved in ammonium transport. The protein is Ammonium transporter 3 member 3 (AMT3-3) of Oryza sativa subsp. japonica (Rice).